The following is a 205-amino-acid chain: Guanylate kinase (205 aa).

Positions 5-183 (GLLIVFSGPS…AAERVKKIIE (179 aa)) constitute a Guanylate kinase-like domain. ATP is bound at residue 12-19 (GPSGVGKG).

This sequence belongs to the guanylate kinase family.

The protein resides in the cytoplasm. It carries out the reaction GMP + ATP = GDP + ADP. Its function is as follows. Essential for recycling GMP and indirectly, cGMP. This is Guanylate kinase (gmk) from Lactococcus lactis subsp. lactis (strain IL1403) (Streptococcus lactis).